The primary structure comprises 335 residues: NADH-quinone oxidoreductase subunit H (335 aa).

8 helical membrane-spanning segments follow: residues 11-31 (VILT…AGAL), 81-101 (VIFT…FAII), 114-134 (IGLL…LFAG), 154-174 (VSYE…VGSF), 187-207 (LWFI…GVAV), 238-258 (FFVG…TLFF), 270-290 (QLSF…FILL), and 307-327 (WKFC…IVLW).

Belongs to the complex I subunit 1 family. As to quaternary structure, NDH-1 is composed of 13 different subunits. Subunits NuoA, H, J, K, L, M, N constitute the membrane sector of the complex.

It localises to the cell inner membrane. The catalysed reaction is a quinone + NADH + 5 H(+)(in) = a quinol + NAD(+) + 4 H(+)(out). Functionally, NDH-1 shuttles electrons from NADH, via FMN and iron-sulfur (Fe-S) centers, to quinones in the respiratory chain. The immediate electron acceptor for the enzyme in this species is believed to be ubiquinone. Couples the redox reaction to proton translocation (for every two electrons transferred, four hydrogen ions are translocated across the cytoplasmic membrane), and thus conserves the redox energy in a proton gradient. This subunit may bind ubiquinone. The protein is NADH-quinone oxidoreductase subunit H of Pseudomonas fluorescens (strain Pf0-1).